A 186-amino-acid chain; its full sequence is Elongation factor P (186 aa).

It belongs to the elongation factor P family.

It is found in the cytoplasm. It participates in protein biosynthesis; polypeptide chain elongation. Functionally, involved in peptide bond synthesis. Stimulates efficient translation and peptide-bond synthesis on native or reconstituted 70S ribosomes in vitro. Probably functions indirectly by altering the affinity of the ribosome for aminoacyl-tRNA, thus increasing their reactivity as acceptors for peptidyl transferase. This Synechococcus sp. (strain RCC307) protein is Elongation factor P.